Here is a 441-residue protein sequence, read N- to C-terminus: Endoglucanase E-2 (441 aa).

Positions 1 to 31 form a signal peptide, tat-type signal; the sequence is MSPRPLRALLGAAAAALVSAAALAFPSQAAA. Positions 32 to 320 are catalytic; the sequence is NDSPFYVNPN…YEMAIAAGGT (289 aa). D110 is a catalytic residue. Cystine bridges form between C111-C156 and C263-C298. D148 serves as the catalytic Proton donor. D296 acts as the Nucleophile in catalysis. A disordered region spans residues 317–343; that stretch reads AGGTNPNPNPNPTPTPTPTPTPPPGSS. The interval 321–340 is linker; sequence NPNPNPNPTPTPTPTPTPPP. Pro residues predominate over residues 323 to 341; it reads NPNPNPTPTPTPTPTPPPG. The 103-residue stretch at 339–441 folds into the CBM2 domain; the sequence is PPGSSGACTA…SVPTLTCAAS (103 aa). An intrachain disulfide couples C346 to C438.

Belongs to the glycosyl hydrolase 6 (cellulase B) family. Homodimer. Predicted to be exported by the Tat system. The position of the signal peptide cleavage has been experimentally proven.

The enzyme catalyses Endohydrolysis of (1-&gt;4)-beta-D-glucosidic linkages in cellulose, lichenin and cereal beta-D-glucans.. It functions in the pathway glycan metabolism; cellulose degradation. The sequence is that of Endoglucanase E-2 (celB) from Thermobifida fusca (Thermomonospora fusca).